A 638-amino-acid polypeptide reads, in one-letter code: Leucine-rich repeat-containing protein 63 (638 aa).

2 disordered regions span residues 220–241 (VPST…PSAA) and 306–325 (TTAA…TVQR). 6 LRR repeats span residues 389–412 (AFQL…ILYL), 413–435 (QNLQ…IHLL), 437–458 (YLRI…LFCL), 460–481 (YLEE…IQKL), 482–504 (RSLE…ILKL), and 532–556 (LTQI…VRKS).

The sequence is that of Leucine-rich repeat-containing protein 63 from Mus musculus (Mouse).